The primary structure comprises 89 residues: Small ribosomal subunit protein uS17 (89 aa).

The protein belongs to the universal ribosomal protein uS17 family. In terms of assembly, part of the 30S ribosomal subunit.

One of the primary rRNA binding proteins, it binds specifically to the 5'-end of 16S ribosomal RNA. In Phytoplasma mali (strain AT), this protein is Small ribosomal subunit protein uS17.